We begin with the raw amino-acid sequence, 430 residues long: Glutamate-1-semialdehyde 2,1-aminomutase (430 aa).

N6-(pyridoxal phosphate)lysine is present on K265.

The protein belongs to the class-III pyridoxal-phosphate-dependent aminotransferase family. HemL subfamily. Homodimer. Pyridoxal 5'-phosphate serves as cofactor.

It is found in the cytoplasm. It carries out the reaction (S)-4-amino-5-oxopentanoate = 5-aminolevulinate. The protein operates within porphyrin-containing compound metabolism; protoporphyrin-IX biosynthesis; 5-aminolevulinate from L-glutamyl-tRNA(Glu): step 2/2. This chain is Glutamate-1-semialdehyde 2,1-aminomutase, found in Shewanella baltica (strain OS223).